The primary structure comprises 248 residues: Mannose-binding protein C (248 aa).

The first 20 residues, 1-20, serve as a signal peptide directing secretion; that stretch reads MSLIPSLSLLLMSMVAASYS. The Collagen-like domain maps to 42-99; it reads GINGFPGKDGRDGTKGEKGEPGQGLRGLQGPPGKLGPPGNPGPSGSPGPKGQKGDPGN. The interval 43–110 is disordered; that stretch reads INGFPGKDGR…PDCDSSLAVS (68 aa). Proline 47 carries the 4-hydroxyproline modification. The span at 49 to 61 shows a compositional bias: basic and acidic residues; that stretch reads KDGRDGTKGEKGE. 4 positions are modified to 4-hydroxyproline: proline 73, proline 79, proline 82, and proline 88. Residues 75 to 87 show a composition bias toward pro residues; the sequence is KLGPPGNPGPSGS. Positions 112–130 form a coiled coil; it reads RKALQTEMARIKKWLTFSL. The 112-residue stretch at 134-245 folds into the C-type lectin domain; the sequence is VGNKFFLTNG…CSSSHLAVCE (112 aa). 2 cysteine pairs are disulfide-bonded: cysteine 155-cysteine 244 and cysteine 222-cysteine 236.

As to quaternary structure, oligomeric complex of 3 or more homotrimers. Interacts with MASP1 and MASP2. Interacts with MEP1A and MEP1B and may inhibit their catalytic activity. Post-translationally, hydroxylation on proline residues within the sequence motif, GXPG, is most likely to be 4-hydroxy as this fits the requirement for 4-hydroxylation in vertebrates.

It is found in the secreted. Its function is as follows. Calcium-dependent lectin involved in innate immune defense. Binds mannose, fucose and N-acetylglucosamine on different microorganisms and activates the lectin complement pathway. Binds to late apoptotic cells, as well as to apoptotic blebs and to necrotic cells, but not to early apoptotic cells, facilitating their uptake by macrophages. This chain is Mannose-binding protein C (MBL2), found in Nomascus concolor (Black crested gibbon).